The primary structure comprises 173 residues: dCTP deaminase, dUMP-forming (173 aa).

DCTP-binding positions include 93–98, aspartate 111, 119–121, glutamine 138, and tyrosine 151; these read RSSTGR and TLE. Glutamate 121 (proton donor/acceptor) is an active-site residue.

Belongs to the dCTP deaminase family. As to quaternary structure, homotrimer.

The catalysed reaction is dCTP + 2 H2O = dUMP + NH4(+) + diphosphate. It participates in pyrimidine metabolism; dUMP biosynthesis; dUMP from dCTP: step 1/1. Its function is as follows. Bifunctional enzyme that catalyzes both the deamination of dCTP to dUTP and the hydrolysis of dUTP to dUMP without releasing the toxic dUTP intermediate. This Clostridium beijerinckii (strain ATCC 51743 / NCIMB 8052) (Clostridium acetobutylicum) protein is dCTP deaminase, dUMP-forming.